The sequence spans 82 residues: U10-myrmicitoxin-Mri1c (82 aa).

A signal peptide spans 1–26; the sequence is MRLSYVSLTLAIIFVMAIVHAPETEA. A propeptide spanning residues 27–52 is cleaved from the precursor; it reads KAYPEADAVGEASAVGEADAVGVADP. Position 81 is an isoleucine amide (Ile-81).

Belongs to the formicidae venom precursor-01 superfamily. In terms of tissue distribution, expressed by the venom gland.

Its subcellular location is the secreted. In terms of biological role, induces paralysis 5 minutes after injection into blowflies (L.caesar). In most cases is not lethal 24 hours after injection, but paralysis is irreversible. May have antimicrobial properties, like most ant linear peptides. The chain is U10-myrmicitoxin-Mri1c from Manica rubida (European giant red ant).